A 502-amino-acid polypeptide reads, in one-letter code: MADKADKMKARLPRGFVDRVPDDLRAAEKMMATIREVYDLYGFEPVETPLVEYTDALGKFLPDQDRPNEGVFSFQDDDEQWLSLRYDLTAPLARYVAENFETLPKPYRSYRNGWVFRNEKPGPGRFRQFMQFDADTVGAPNVSADAEMCMMMADTLERLGIQRGDYAIRVNNRKVLDGVLDAIGLEGEGNAAKRLNVLRAIDKLDKFGPEGVRLLLGKGRLDESGDFTKGAQLPEAAIEKVLAFTAAGGADGAQTIANLQAVVAGNAKGEEGVQELADMQALFFAGGYEGRVKIDPSVVRGLEYYTGPVFEAELLFDVTNEDGQKVVFGSVGGGGRYDGLVSRFRGEPVPATGFSIGVSRLMTALKNLGKLDVSDTVGPVVVLVMDKDTQNLGRYQKMVSDLRKAGIRAEMYVGGSGMKAQMKYADRRAAPCVVIQGSQEREAGEVQIKDLVEGKRLSAEIEDNVTWRESRPAQITVREDGLVDAVREILDAQARDRAEQSK.

The protein belongs to the class-II aminoacyl-tRNA synthetase family. In terms of assembly, homodimer.

The protein resides in the cytoplasm. It catalyses the reaction tRNA(His) + L-histidine + ATP = L-histidyl-tRNA(His) + AMP + diphosphate + H(+). In Brucella suis (strain ATCC 23445 / NCTC 10510), this protein is Histidine--tRNA ligase.